Here is a 211-residue protein sequence, read N- to C-terminus: FMN-dependent NADH:quinone oxidoreductase (211 aa).

FMN-binding positions include Ser-10 and 16 to 18 (SVS).

It belongs to the azoreductase type 1 family. Homodimer. The cofactor is FMN.

The catalysed reaction is 2 a quinone + NADH + H(+) = 2 a 1,4-benzosemiquinone + NAD(+). The enzyme catalyses N,N-dimethyl-1,4-phenylenediamine + anthranilate + 2 NAD(+) = 2-(4-dimethylaminophenyl)diazenylbenzoate + 2 NADH + 2 H(+). Its function is as follows. Quinone reductase that provides resistance to thiol-specific stress caused by electrophilic quinones. Functionally, also exhibits azoreductase activity. Catalyzes the reductive cleavage of the azo bond in aromatic azo compounds to the corresponding amines. This is FMN-dependent NADH:quinone oxidoreductase from Parafrankia sp. (strain EAN1pec).